The chain runs to 172 residues: AIG2-like protein B (172 aa).

15 to 20 (YGSFQE) provides a ligand contact to substrate. Glu83 acts as the Proton acceptor in catalysis. Over residues 146–165 (KRNPQGKGRDDFSNVLKEED) the composition is skewed to basic and acidic residues. The interval 146 to 172 (KRNPQGKGRDDFSNVLKEEDPANAPSS) is disordered.

The protein belongs to the gamma-glutamylcyclotransferase family. In terms of tissue distribution, expressed in flowerss, leaves, stems, seeds and roots.

The protein localises to the cell membrane. Its function is as follows. Putative gamma-glutamylcyclotransferase. The protein is AIG2-like protein B of Arabidopsis thaliana (Mouse-ear cress).